Here is a 505-residue protein sequence, read N- to C-terminus: Outer capsid protein VP5 (505 aa).

Positions 1-42 are involved in membrane permeabilization; the sequence is MGKFTSFLKRAGNATKRALTSDSAKKMYKLAGKTLQRVVESE.

It belongs to the orbivirus VP5 family.

The protein localises to the virion. In terms of biological role, VP5 protein is one of the two proteins (with VP2) which constitute the virus particle outer capsid. Acts as a membrane permeabilization protein that mediates release of viral particles from endosomal compartments into the cytoplasm. Permeabilization activity is probably negatively regulated by VP2 and is triggered by endosomal degradation of VP2 and exposure to low pH. This is Outer capsid protein VP5 (Segment-6) from African horse sickness virus (AHSV).